A 327-amino-acid polypeptide reads, in one-letter code: ATP-dependent 6-phosphofructokinase (327 aa).

Residues Gly11, 72 to 73, and 102 to 105 contribute to the ATP site; these read RS and GDGS. Asp103 contacts Mg(2+). A substrate-binding site is contributed by 127-129; it reads TID. Asp129 serves as the catalytic Proton acceptor. ADP is bound at residue Arg156. Substrate-binding positions include Arg164 and 171–173; that span reads MGR. 187–189 contributes to the ADP binding site; that stretch reads GAE. Substrate-binding positions include Glu224, Arg245, and 251 to 254; that span reads HIQR.

The protein belongs to the phosphofructokinase type A (PFKA) family. ATP-dependent PFK group I subfamily. Prokaryotic clade 'B1' sub-subfamily. As to quaternary structure, homotetramer. Mg(2+) serves as cofactor.

Its subcellular location is the cytoplasm. The catalysed reaction is beta-D-fructose 6-phosphate + ATP = beta-D-fructose 1,6-bisphosphate + ADP + H(+). It participates in carbohydrate degradation; glycolysis; D-glyceraldehyde 3-phosphate and glycerone phosphate from D-glucose: step 3/4. Its activity is regulated as follows. Allosterically activated by ADP and other diphosphonucleosides, and allosterically inhibited by phosphoenolpyruvate. Catalyzes the phosphorylation of D-fructose 6-phosphate to fructose 1,6-bisphosphate by ATP, the first committing step of glycolysis. In Sulfurovum sp. (strain NBC37-1), this protein is ATP-dependent 6-phosphofructokinase.